The chain runs to 500 residues: Cytochrome P450 2D20 (500 aa).

Cysteine 446 is a binding site for heme.

The protein belongs to the cytochrome P450 family. Requires heme as cofactor.

It is found in the endoplasmic reticulum membrane. The protein resides in the microsome membrane. This Mesocricetus auratus (Golden hamster) protein is Cytochrome P450 2D20 (CYP2D20).